Reading from the N-terminus, the 208-residue chain is Type 4 adapter protein LvgA (208 aa).

Residues 184–208 (GYGYPPESPRENYKHPVSSATTARK) form a disordered region.

As to quaternary structure, the T4BSS is a complex nanomachine composed of several subcomplexes. This subunit is part of the Type IV Coupling Complex (T4CC), a subcomplex composed of the DotLMNYZ core and the IcmSW-LvgA adapter subunits, linked by the C-terminal tail of DotL.

It is found in the cytoplasm. Component of the Dot/Icm type IVB secretion system (T4BSS), which is used to inject bacterial effector proteins into eukaryotic host cells. Part of a subcomplex which recruits effector proteins and delivers them to the core transmembrane subcomplex. Is a critical subunit for binding a subset of effector proteins. Recognizes more than one type of binding motif. May be a critical factor that confers host specificity. Necessary for full virulence of the bacterium in guinea pigs and presumably humans. This chain is Type 4 adapter protein LvgA, found in Legionella pneumophila.